The following is a 556-amino-acid chain: Formate--tetrahydrofolate ligase 1 (556 aa).

Thr65–Ser72 provides a ligand contact to ATP.

Belongs to the formate--tetrahydrofolate ligase family.

The enzyme catalyses (6S)-5,6,7,8-tetrahydrofolate + formate + ATP = (6R)-10-formyltetrahydrofolate + ADP + phosphate. It participates in one-carbon metabolism; tetrahydrofolate interconversion. In Streptococcus pyogenes serotype M1, this protein is Formate--tetrahydrofolate ligase 1.